The chain runs to 89 residues: Putative protein T-ENOL (89 aa).

Disordered stretches follow at residues 1 to 31 (MAST…KASL) and 54 to 89 (RSHM…TDTR).

In terms of tissue distribution, specifically expressed in testis (at protein level).

The chain is Putative protein T-ENOL from Rattus norvegicus (Rat).